Here is a 100-residue protein sequence, read N- to C-terminus: MDMFADNVVTLVDEEGREISFEMLDKVNYNGNDYIVLLPLEEIEKEDEEAEVIILRIEDRDGEEVYVGVEDEEELENVFEIFQSRFDDEDFDMYDEEDEE.

The protein belongs to the UPF0473 family.

This Caldicellulosiruptor saccharolyticus (strain ATCC 43494 / DSM 8903 / Tp8T 6331) protein is UPF0473 protein Csac_1599.